The sequence spans 192 residues: Adenylate kinase (192 aa).

12-17 (GSGKTT) is an ATP binding site. The interval 34–63 (STGDLLRAEVASGSELGKTIDSFISKGNLV) is NMP. AMP contacts are provided by residues Thr35, Arg40, 61 to 63 (NLV), 88 to 91 (GYPR), and Gln95. The LID stretch occupies residues 130-136 (GRNRGAD). Position 131 (Arg131) interacts with ATP. Arg133 and Arg145 together coordinate AMP. An ATP-binding site is contributed by Arg173.

Belongs to the adenylate kinase family. Monomer.

It localises to the cytoplasm. The catalysed reaction is AMP + ATP = 2 ADP. It participates in purine metabolism; AMP biosynthesis via salvage pathway; AMP from ADP: step 1/1. Functionally, catalyzes the reversible transfer of the terminal phosphate group between ATP and AMP. Plays an important role in cellular energy homeostasis and in adenine nucleotide metabolism. This is Adenylate kinase from Campylobacter jejuni subsp. jejuni serotype O:6 (strain 81116 / NCTC 11828).